The following is an 834-amino-acid chain: WPP domain-associated protein (834 aa).

Coiled-coil stretches lie at residues 410–456, 574–700, and 792–812; these read SFGN…RLQH, SLDT…VLAI, and AEAE…LVEK.

In terms of assembly, interacts with MAF1. Expressed in seedlings, leaves and fruits.

It is found in the golgi apparatus. Its subcellular location is the cytoplasm. The polypeptide is WPP domain-associated protein (WAP) (Solanum lycopersicum (Tomato)).